Here is a 1963-residue protein sequence, read N- to C-terminus: Myosin-4 (1963 aa).

The region spanning 28-77 (DSKKNVWIPDPEEGYLAGEITATKGDQVTIVTARGNEVTLKKELVQEMNP) is the Myosin N-terminal SH3-like domain. In terms of domain architecture, Myosin motor spans 81-787 (EKTEDMSNLS…VLAHLEDIRD (707 aa)). N6,N6,N6-trimethyllysine is present on lysine 125. Residue 174-181 (GESGAGKT) participates in ATP binding. Actin-binding regions lie at residues 662–684 (LNNL…IPNE) and 766–780 (RIGL…GVLA). Residues 848–1161 (MLKAGKEAEE…LEELGEKLDE (314 aa)) are alpha-helical tailpiece (S2). Residues 848–1963 (MLKAGKEAEE…SPSRARASDF (1116 aa)) adopt a coiled-coil conformation. 2 stretches are compositionally biased toward basic and acidic residues: residues 970–988 (LRKA…RSLQ) and 1133–1146 (NERQ…RAKS). Disordered regions lie at residues 970–990 (LRKA…LQDE) and 1125–1146 (SELE…RAKS). Residues 1162–1173 (QGGATAAQVEVN) are hinge. Positions 1162–1963 (QGGATAAQVE…SPSRARASDF (802 aa)) are light meromyosin (LMM). Disordered stretches follow at residues 1317–1336 (LTSQ…RERQ) and 1912–1963 (LEDA…ASDF). Residues 1322-1336 (EEARRTADEEARERQ) show a composition bias toward basic and acidic residues.

This sequence belongs to the TRAFAC class myosin-kinesin ATPase superfamily. Myosin family. Muscle myosin is a hexameric protein that consists of 2 heavy chain subunits (MHC), 2 alkali light chain subunits (MLC) and 2 regulatory light chain subunits (MLC-2). Forms a complex composed of chaperone unc-45, unc-54 and ubiquitin-protein ligase ufd-2; promotes poly-ubiquitination of unfolded unc-54. Within the complex interacts with unc-45 (via UCS domain) and ufd-2. Interacts with itr-1 (via c-terminal coiled coil domain). In terms of processing, unfolded unc-54 is poly-ubiquitinated by ufd-2.

The protein resides in the cytoplasm. It localises to the myofibril. Its function is as follows. Required for muscle contraction. In Caenorhabditis elegans, this protein is Myosin-4 (unc-54).